A 230-amino-acid polypeptide reads, in one-letter code: Heptaprenylglyceryl phosphate synthase (230 aa).

Lys12 contributes to the sn-glycerol 1-phosphate binding site. Asp14 and Ser40 together coordinate Mg(2+). Residues 159–164, Gly189, and 209–210 contribute to the sn-glycerol 1-phosphate site; these read YLEYSG and GN.

Belongs to the GGGP/HepGP synthase family. Group I subfamily. As to quaternary structure, homodimer. The cofactor is Mg(2+).

It carries out the reaction sn-glycerol 1-phosphate + all-trans-heptaprenyl diphosphate = 3-heptaprenyl-sn-glycero-1-phosphate + diphosphate. It functions in the pathway membrane lipid metabolism; glycerophospholipid metabolism. Prenyltransferase that catalyzes in vivo the transfer of the heptaprenyl moiety of heptaprenyl pyrophosphate (HepPP; 35 carbon atoms) to the C3 hydroxyl of sn-glycerol-1-phosphate (G1P), producing heptaprenylglyceryl phosphate (HepGP). This reaction is an ether-bond-formation step in the biosynthesis of archaea-type G1P-based membrane lipids found in Bacillales. The sequence is that of Heptaprenylglyceryl phosphate synthase from Bacillus pumilus (strain SAFR-032).